We begin with the raw amino-acid sequence, 179 residues long: Protein GrpE (179 aa).

The segment at 1–23 (MSEEIKEQNVQDAQNENLAPDSV) is disordered.

It belongs to the GrpE family. In terms of assembly, homodimer.

The protein resides in the cytoplasm. Its function is as follows. Participates actively in the response to hyperosmotic and heat shock by preventing the aggregation of stress-denatured proteins, in association with DnaK and GrpE. It is the nucleotide exchange factor for DnaK and may function as a thermosensor. Unfolded proteins bind initially to DnaJ; upon interaction with the DnaJ-bound protein, DnaK hydrolyzes its bound ATP, resulting in the formation of a stable complex. GrpE releases ADP from DnaK; ATP binding to DnaK triggers the release of the substrate protein, thus completing the reaction cycle. Several rounds of ATP-dependent interactions between DnaJ, DnaK and GrpE are required for fully efficient folding. This is Protein GrpE from Campylobacter curvus (strain 525.92).